The sequence spans 287 residues: Bifunctional protein FolD (287 aa).

NADP(+)-binding positions include Gly165–Gly167, Thr190, and Ile231.

Belongs to the tetrahydrofolate dehydrogenase/cyclohydrolase family. Homodimer.

The catalysed reaction is (6R)-5,10-methylene-5,6,7,8-tetrahydrofolate + NADP(+) = (6R)-5,10-methenyltetrahydrofolate + NADPH. The enzyme catalyses (6R)-5,10-methenyltetrahydrofolate + H2O = (6R)-10-formyltetrahydrofolate + H(+). The protein operates within one-carbon metabolism; tetrahydrofolate interconversion. Functionally, catalyzes the oxidation of 5,10-methylenetetrahydrofolate to 5,10-methenyltetrahydrofolate and then the hydrolysis of 5,10-methenyltetrahydrofolate to 10-formyltetrahydrofolate. The polypeptide is Bifunctional protein FolD (Heliobacterium modesticaldum (strain ATCC 51547 / Ice1)).